The following is a 377-amino-acid chain: Alternative oxidase, mitochondrial (377 aa).

A helical transmembrane segment spans residues 149–169; it reads LSRFIFLESIAAVPGMVAGML. Residues glutamate 156, glutamate 195, and histidine 198 each contribute to the Fe cation site. Residues 214-234 form a helical membrane-spanning segment; sequence ILIIGAQGVYFNAMFVAYLIS. The Fe cation site is built by glutamate 246, glutamate 303, and histidine 306.

This sequence belongs to the alternative oxidase family. Fe cation is required as a cofactor.

The protein resides in the mitochondrion inner membrane. In terms of biological role, catalyzes cyanide-resistant oxygen consumption. May increase respiration when the cytochrome respiratory pathway is restricted, or in response to low temperatures. The protein is Alternative oxidase, mitochondrial (AOX1) of Pyricularia oryzae (strain 70-15 / ATCC MYA-4617 / FGSC 8958) (Rice blast fungus).